The following is a 398-amino-acid chain: ATP-dependent RNA helicase eIF4A (398 aa).

The Q motif motif lies at 25–53 (DSFDSMELKPELLRGVYAYGFERPSAIQQ). One can recognise a Helicase ATP-binding domain in the interval 56 to 226 (ILPIVKGNDV…TKFMRDPVRI (171 aa)). 69–76 (AQSGTGKT) serves as a coordination point for ATP. The DEAD box signature appears at 174 to 177 (DEAD). The Helicase C-terminal domain occupies 237–398 (GIKQFYIAVE…EMPMNVADLI (162 aa)).

The protein belongs to the DEAD box helicase family. eIF4A subfamily. As to quaternary structure, component of the eIF4F complex, which composition varies with external and internal environmental conditions. It is composed of at least eIF4A, eIF4E and eIF4G.

It is found in the cytoplasm. The enzyme catalyses ATP + H2O = ADP + phosphate + H(+). Functionally, ATP-dependent RNA helicase which is a subunit of the eIF4F complex involved in cap recognition and is required for mRNA binding to ribosome. In the current model of translation initiation, eIF4A unwinds RNA secondary structures in the 5'-UTR of mRNAs which is necessary to allow efficient binding of the small ribosomal subunit, and subsequent scanning for the initiator codon. This chain is ATP-dependent RNA helicase eIF4A (tif1), found in Emericella nidulans (strain FGSC A4 / ATCC 38163 / CBS 112.46 / NRRL 194 / M139) (Aspergillus nidulans).